Consider the following 88-residue polypeptide: Translation initiation factor IF-1 3 (88 aa).

An S1-like domain is found at Met-1–Lys-72.

The protein belongs to the IF-1 family. In terms of assembly, component of the 30S ribosomal translation pre-initiation complex which assembles on the 30S ribosome in the order IF-2 and IF-3, IF-1 and N-formylmethionyl-tRNA(fMet); mRNA recruitment can occur at any time during PIC assembly.

The protein localises to the cytoplasm. One of the essential components for the initiation of protein synthesis. Stabilizes the binding of IF-2 and IF-3 on the 30S subunit to which N-formylmethionyl-tRNA(fMet) subsequently binds. Helps modulate mRNA selection, yielding the 30S pre-initiation complex (PIC). Upon addition of the 50S ribosomal subunit IF-1, IF-2 and IF-3 are released leaving the mature 70S translation initiation complex. The protein is Translation initiation factor IF-1 3 of Burkholderia orbicola (strain AU 1054).